The chain runs to 669 residues: Filensin (669 aa).

Residues 1–33 (MYRRSYVFQARQERYERAQPAGPAAQPGGTAPG) are head. Phosphoserine is present on Ser-5. An IF rod domain is found at 33–318 (GLAALQALGE…RIIEIEGSRL (286 aa)). The tract at residues 34-68 (LAALQALGERVAVQVQRARALQQRHAGLRRQLDAF) is coil 1A. Ala-35 is modified (N-acetylalanine). Residues 69-77 (QRLGEQPGP) form a linker 1 region. The segment at 78-177 (EDALARHVEA…RYKKNLLEIQ (100 aa)) is coil 1B. The segment at 178-194 (TYITVLQQIVQTAPQVS) is linker 12. Positions 195–318 (LVTGMRESGL…RIIEIEGSRL (124 aa)) are coil 2. A tail region spans residues 319 to 669 (SSVFIETPIS…GEKSLPDTRA (351 aa)). Ser-339 is modified (phosphoserine). 3 disordered regions span residues 380 to 435 (VEET…GGQI), 449 to 468 (RVSG…FTKG), and 505 to 618 (HHDG…KALS). A compositionally biased stretch (gly residues) spans 408–417 (SQPGAGGGHG). Gly-432 carries the N-myristoyl glycine lipid modification. Ser-513 is modified (phosphoserine). The segment covering 545 to 570 (NGLRAKEPKDLEEKDDDGKKEAEGSR) has biased composition (basic and acidic residues). Over residues 583 to 593 (PSTSHSQTSGS) the composition is skewed to polar residues. Phosphothreonine is present on Thr-585.

The protein belongs to the intermediate filament family. In terms of assembly, part of a complex required for lens intermediate filament formation composed of BFSP1, BFSP2 and CRYAA. Identified in a complex that contains VIM, EZR, AHNAK, BFSP1, BFSP2, ANK2, PLEC, PRX and spectrin. Found in a complex composed of PPL (via C-terminal linker domain), BFSP1 and BFSP2 in the retinal lens. Within the complex interacts with BFSP2. Interacts (via C-terminus) with MIP (via C-terminus) in aged lens fiber cells. Proteolytically cleaved during lens cell fiber differentiation with increased fragmentation as fiber cell age increases. Post-translationally, myristoylated at Gly-432 following proteolytic cleavage at Asp-431. In terms of processing, acetylated at Ala-35 following proteolytic cleavage at Leu-34. As to expression, detected in eye lens fiber cells (at protein level). Expressed in retinal lens epithelial cells (at protein level).

Its subcellular location is the cell membrane. The protein resides in the cytoplasm. It localises to the cytoskeleton. It is found in the cell cortex. Its function is as follows. Required for the correct formation of lens intermediate filaments as part of a complex composed of BFSP1, BFSP2 and CRYAA. Involved in altering the calcium regulation of MIP water permeability. The polypeptide is Filensin (Bfsp1) (Mus musculus (Mouse)).